The following is a 277-amino-acid chain: Soluble NSF attachment protein 29 (277 aa).

A compositionally biased stretch (basic and acidic residues) spans 1–11; sequence MSRNPFDDDYR. Disordered stretches follow at residues 1–30, 49–73, and 117–170; these read MSRN…MGHY, ESLD…STAQ, and KFTK…ESSR. Polar residues predominate over residues 14 to 28; it reads AASSTMPVKSYTTMG. The t-SNARE coiled-coil homology 1 domain maps to 44–106; sequence EKTLQESLDS…QMTQRNLNSL (63 aa). The span at 49-65 shows a compositional bias: basic and acidic residues; sequence ESLDSTERSRRHLENSE. Residues 134-170 show a composition bias toward polar residues; it reads SKSASRLSETATNLSSGGGSATFSGPSGQRTLTESSR. Positions 179-241 constitute a t-SNARE coiled-coil homology 2 domain; the sequence is EAMDNQIDEN…RDQDKQMQKI (63 aa).

It belongs to the SNAP-25 family.

It is found in the synapse. The protein resides in the synaptosome. Its function is as follows. SNAREs, soluble N-ethylmaleimide-sensitive factor-attachment protein receptors, are essential proteins for fusion of cellular membranes. SNAREs localized on opposing membranes assemble to form a trans-SNARE complex, an extended, parallel four alpha-helical bundle that drives membrane fusion. Plays a role in the processing and secretion of the aspartic protease hrg-7 from the intestine. The polypeptide is Soluble NSF attachment protein 29 (Caenorhabditis elegans).